Reading from the N-terminus, the 862-residue chain is MQEQYNPQDLEQKVQKHWDDNKTFVVSEDPNKEKFYCLSMFPYPSGRLHMGHVRNYTIGDVVSRFQRLQGKNVMQPIGWDAFGLPAENAAVKNNTAPAPWTYENIEYMKNQLKLLGFGYDWNREFATCTPEYYRWEQEFFTKLYEKGLVYKKTSSVNWCPNDQTVLANEQVEDGCCWRCDTPVEQKEIPQWFIKITEYAQELLDDLDKLEGWPEMVKTMQRNWIGRSEGVELRFALKDSEVKGQQDLEVYTTRPDTLMGVTYVGIAAGHPLATIAAENNPELAAFIEECKNTKVAEAELATMEKKGMATGLTAIHPLNGREVPVYVANFVLMDYGTGAVMAVPAHDQRDFEFATKYGLDIVPVIKPVDGSELDTSEAAYTEKGVLFDSGEFDGLEFQAAFDAIAAKLEAEGKGTKTVNFRLRDWGVSRQRYWGAPIPMVTTEDGEVHPVPADQLPVILPEDVVMDGVTSPIKADKEWAKTTFNGEPALRETDTFDTFMESSWYYARYCSPQADDILAPEKANYWLPVDQYIGGIEHACMHLLYSRFFHKLLRDAGYVTSDEPFKQLLCQGMVLADAFYFENEKGGKEWVAPTDVAVERDGKGRITSAKDTEGRDVTHSGMIKMSKSKNNGIDPQEMVDKYGADTVRLFMMFASPADMTLEWQESGVEGANRFLKRVWKLVNEHTSKGAAEAVDAAALSGDQKALRRDVHKTIAKVTDDIDRRQTFNTAIAAIMELMNKLAKAPQESAQDRVILDEALKAVVAMLYPITPHISYELWAALGEADIDNAAWPTFDEKALVEDEKTIVVQVNGKLRAKLTVAADATKEQVEELGLNDENVTKFTDGLTIRKVIYVPGKLLNIVAN.

A 'HIGH' region motif is present at residues 42–52 (PYPSGRLHMGH). Residues 622 to 626 (KMSKS) carry the 'KMSKS' region motif. K625 is an ATP binding site.

The protein belongs to the class-I aminoacyl-tRNA synthetase family.

The protein localises to the cytoplasm. It catalyses the reaction tRNA(Leu) + L-leucine + ATP = L-leucyl-tRNA(Leu) + AMP + diphosphate. This is Leucine--tRNA ligase from Vibrio campbellii (strain ATCC BAA-1116).